Here is a 158-residue protein sequence, read N- to C-terminus: uncharacterized protein (158 aa).

The next 4 helical transmembrane spans lie at 42–62 (FHFA…GFLY), 71–91 (WIFI…HLIA), 102–122 (LLTG…QMFL), and 130–150 (ELII…PLLF).

The protein localises to the cell membrane. This is an uncharacterized protein from Bacillus subtilis (strain 168).